Consider the following 115-residue polypeptide: Ribonuclease P protein component (115 aa).

It belongs to the RnpA family. Consists of a catalytic RNA component (M1 or rnpB) and a protein subunit.

It catalyses the reaction Endonucleolytic cleavage of RNA, removing 5'-extranucleotides from tRNA precursor.. Functionally, RNaseP catalyzes the removal of the 5'-leader sequence from pre-tRNA to produce the mature 5'-terminus. It can also cleave other RNA substrates such as 4.5S RNA. The protein component plays an auxiliary but essential role in vivo by binding to the 5'-leader sequence and broadening the substrate specificity of the ribozyme. In Buchnera aphidicola subsp. Acyrthosiphon pisum (strain APS) (Acyrthosiphon pisum symbiotic bacterium), this protein is Ribonuclease P protein component.